Consider the following 248-residue polypeptide: Probable transcriptional regulatory protein AZC_0510 (248 aa).

The protein belongs to the TACO1 family.

It localises to the cytoplasm. This Azorhizobium caulinodans (strain ATCC 43989 / DSM 5975 / JCM 20966 / LMG 6465 / NBRC 14845 / NCIMB 13405 / ORS 571) protein is Probable transcriptional regulatory protein AZC_0510.